Reading from the N-terminus, the 453-residue chain is GTPase Der (453 aa).

EngA-type G domains lie at 3 to 167 and 187 to 360; these read PIIV…ISEK and IKVA…EDSK. GTP-binding positions include 9-16, 57-61, 119-122, 193-200, 240-244, and 305-308; these read GRTNVGKS, DTAGL, NKID, GRPNVGKS, DTAGA, and NKCD. The KH-like domain maps to 361–445; it reads RKISTSTLIK…PIQIQFKDNE (85 aa).

It belongs to the TRAFAC class TrmE-Era-EngA-EngB-Septin-like GTPase superfamily. EngA (Der) GTPase family. As to quaternary structure, associates with the 50S ribosomal subunit.

In terms of biological role, GTPase that plays an essential role in the late steps of ribosome biogenesis. The chain is GTPase Der from Buchnera aphidicola subsp. Acyrthosiphon pisum (strain 5A).